A 176-amino-acid polypeptide reads, in one-letter code: Large ribosomal subunit protein uL6 (176 aa).

This sequence belongs to the universal ribosomal protein uL6 family. As to quaternary structure, part of the 50S ribosomal subunit.

In terms of biological role, this protein binds to the 23S rRNA, and is important in its secondary structure. It is located near the subunit interface in the base of the L7/L12 stalk, and near the tRNA binding site of the peptidyltransferase center. This Shewanella sediminis (strain HAW-EB3) protein is Large ribosomal subunit protein uL6.